We begin with the raw amino-acid sequence, 238 residues long: Ubiquinone biosynthesis O-methyltransferase (238 aa).

4 residues coordinate S-adenosyl-L-methionine: Arg-39, Gly-59, Asp-80, and Met-124.

The protein belongs to the methyltransferase superfamily. UbiG/COQ3 family.

The catalysed reaction is a 3-demethylubiquinol + S-adenosyl-L-methionine = a ubiquinol + S-adenosyl-L-homocysteine + H(+). The enzyme catalyses a 3-(all-trans-polyprenyl)benzene-1,2-diol + S-adenosyl-L-methionine = a 2-methoxy-6-(all-trans-polyprenyl)phenol + S-adenosyl-L-homocysteine + H(+). It participates in cofactor biosynthesis; ubiquinone biosynthesis. Functionally, O-methyltransferase that catalyzes the 2 O-methylation steps in the ubiquinone biosynthetic pathway. This chain is Ubiquinone biosynthesis O-methyltransferase, found in Aeromonas salmonicida (strain A449).